The following is a 125-amino-acid chain: Acidic phospholipase A2 5 (125 aa).

Ser1 is a signal peptide. The propeptide occupies 2–7 (NRPMPL). 8 cysteine pairs are disulfide-bonded: Cys18–Cys77, Cys33–Cys124, Cys35–Cys50, Cys37–Cys54, Cys49–Cys105, Cys56–Cys98, Cys66–Cys91, and Cys84–Cys96. Position 28 (Phe28) interacts with N-acetyl-beta-D-glucosamine. Asp30 is a Zn(2+) binding site. 2 residues coordinate Ca(2+): Tyr34 and Gly36. N-acetyl-beta-D-glucosamine is bound by residues His53 and Lys69. His53 is a catalytic residue. Zn(2+) is bound at residue Glu76. Asp99 is a catalytic residue. Asn117 provides a ligand contact to Zn(2+).

As to quaternary structure, heterodimer formed between isoform 5 and isoform 6 in presence of zinc ion and monomer in absence of zinc ion. Ca(2+) serves as cofactor. In terms of tissue distribution, expressed by the venom gland.

It is found in the secreted. It carries out the reaction a 1,2-diacyl-sn-glycero-3-phosphocholine + H2O = a 1-acyl-sn-glycero-3-phosphocholine + a fatty acid + H(+). Its function is as follows. PLA2 catalyzes the calcium-dependent hydrolysis of the 2-acyl groups in 3-sn-phosphoglycerides. The polypeptide is Acidic phospholipase A2 5 (Naja sagittifera (Andaman cobra)).